The chain runs to 524 residues: Peptide chain release factor 3 (524 aa).

The tr-type G domain occupies 9–275 (QRRRTFAIIS…AVVELSPPPL (267 aa)). GTP contacts are provided by residues 18-25 (SHPDAGKT), 86-90 (DTPGH), and 140-143 (NKLD).

The protein belongs to the TRAFAC class translation factor GTPase superfamily. Classic translation factor GTPase family. PrfC subfamily.

It is found in the cytoplasm. In terms of biological role, increases the formation of ribosomal termination complexes and stimulates activities of RF-1 and RF-2. It binds guanine nucleotides and has strong preference for UGA stop codons. It may interact directly with the ribosome. The stimulation of RF-1 and RF-2 is significantly reduced by GTP and GDP, but not by GMP. The polypeptide is Peptide chain release factor 3 (Methylobacillus flagellatus (strain ATCC 51484 / DSM 6875 / VKM B-1610 / KT)).